The primary structure comprises 221 residues: Small ribosomal subunit protein eS8 (221 aa).

2 disordered regions span residues 1–41 and 128–169; these read MGIS…LSSN and TPAA…TLDP. Positions 8 to 26 are enriched in basic residues; the sequence is MHKRRATGGKQKAWRKKRK. The span at 146–169 shows a compositional bias: basic and acidic residues; it reads EETKKSNHVTRKLEKRKEGRTLDP.

This sequence belongs to the eukaryotic ribosomal protein eS8 family.

The polypeptide is Small ribosomal subunit protein eS8 (RPS8) (Zea mays (Maize)).